Reading from the N-terminus, the 342-residue chain is Succinylglutamate desuccinylase (342 aa).

His-64, Glu-67, and His-159 together coordinate Zn(2+). Glu-222 is a catalytic residue.

Belongs to the AspA/AstE family. Succinylglutamate desuccinylase subfamily. Zn(2+) serves as cofactor.

It catalyses the reaction N-succinyl-L-glutamate + H2O = L-glutamate + succinate. Its pathway is amino-acid degradation; L-arginine degradation via AST pathway; L-glutamate and succinate from L-arginine: step 5/5. Its function is as follows. Transforms N(2)-succinylglutamate into succinate and glutamate. The chain is Succinylglutamate desuccinylase from Burkholderia orbicola (strain MC0-3).